The chain runs to 435 residues: ATP-dependent protease ATPase subunit HslU (435 aa).

Residues Ile18, 60 to 65, Asp248, Glu313, and Arg385 each bind ATP; that span reads GVGKTE.

It belongs to the ClpX chaperone family. HslU subfamily. A double ring-shaped homohexamer of HslV is capped on each side by a ring-shaped HslU homohexamer. The assembly of the HslU/HslV complex is dependent on binding of ATP.

The protein localises to the cytoplasm. In terms of biological role, ATPase subunit of a proteasome-like degradation complex; this subunit has chaperone activity. The binding of ATP and its subsequent hydrolysis by HslU are essential for unfolding of protein substrates subsequently hydrolyzed by HslV. HslU recognizes the N-terminal part of its protein substrates and unfolds these before they are guided to HslV for hydrolysis. This is ATP-dependent protease ATPase subunit HslU from Rhizobium meliloti (strain 1021) (Ensifer meliloti).